Reading from the N-terminus, the 546-residue chain is Glucose-6-phosphate isomerase (546 aa).

Glu-353 (proton donor) is an active-site residue. Catalysis depends on residues His-384 and Lys-512.

It belongs to the GPI family.

The protein localises to the cytoplasm. The enzyme catalyses alpha-D-glucose 6-phosphate = beta-D-fructose 6-phosphate. It participates in carbohydrate biosynthesis; gluconeogenesis. The protein operates within carbohydrate degradation; glycolysis; D-glyceraldehyde 3-phosphate and glycerone phosphate from D-glucose: step 2/4. Functionally, catalyzes the reversible isomerization of glucose-6-phosphate to fructose-6-phosphate. This chain is Glucose-6-phosphate isomerase, found in Actinobacillus pleuropneumoniae serotype 3 (strain JL03).